The primary structure comprises 396 residues: Succinyl-diaminopimelate desuccinylase (396 aa).

Residue His-74 coordinates Zn(2+). Residue Asp-76 is part of the active site. Asp-107 provides a ligand contact to Zn(2+). The active-site Proton acceptor is Glu-142. Positions 143, 171, and 360 each coordinate Zn(2+).

The protein belongs to the peptidase M20A family. DapE subfamily. Homodimer. Requires Zn(2+) as cofactor. Co(2+) is required as a cofactor.

It catalyses the reaction N-succinyl-(2S,6S)-2,6-diaminopimelate + H2O = (2S,6S)-2,6-diaminopimelate + succinate. Its pathway is amino-acid biosynthesis; L-lysine biosynthesis via DAP pathway; LL-2,6-diaminopimelate from (S)-tetrahydrodipicolinate (succinylase route): step 3/3. Its function is as follows. Catalyzes the hydrolysis of N-succinyl-L,L-diaminopimelic acid (SDAP), forming succinate and LL-2,6-diaminopimelate (DAP), an intermediate involved in the bacterial biosynthesis of lysine and meso-diaminopimelic acid, an essential component of bacterial cell walls. This Methylobacterium nodulans (strain LMG 21967 / CNCM I-2342 / ORS 2060) protein is Succinyl-diaminopimelate desuccinylase.